The sequence spans 106 residues: Large ribosomal subunit protein uL22 (106 aa).

Belongs to the universal ribosomal protein uL22 family. In terms of assembly, part of the 50S ribosomal subunit.

This protein binds specifically to 23S rRNA; its binding is stimulated by other ribosomal proteins, e.g. L4, L17, and L20. It is important during the early stages of 50S assembly. It makes multiple contacts with different domains of the 23S rRNA in the assembled 50S subunit and ribosome. Its function is as follows. The globular domain of the protein is located near the polypeptide exit tunnel on the outside of the subunit, while an extended beta-hairpin is found that lines the wall of the exit tunnel in the center of the 70S ribosome. The polypeptide is Large ribosomal subunit protein uL22 (Nautilia profundicola (strain ATCC BAA-1463 / DSM 18972 / AmH)).